Consider the following 153-residue polypeptide: uncharacterized protein (153 aa).

A signal peptide spans 1–19 (MRKYIPLVLFIFSWPVLCA). Residues R46, E54, and R88 contribute to the active site.

This sequence belongs to the thermonuclease family.

This is an uncharacterized protein from Escherichia coli.